A 623-amino-acid polypeptide reads, in one-letter code: F-box protein FBX14 (623 aa).

A disordered region spans residues 18 to 48; sequence LNLNPPCSSSSSSSSAATFTNKSRNFKSSPP. Polar residues predominate over residues 33-45; that stretch reads AATFTNKSRNFKS. The region spanning 54-97 is the F-box domain; it reads VLENVLENVLQFLTSRCDRNAVSLVCRSWYRVEAQTRLEVFIGN. Lysine 119 contacts 1D-myo-inositol hexakisphosphate. The segment at 126–127 is interaction with auxin-responsive proteins; it reads DF. 1D-myo-inositol hexakisphosphate-binding positions include 158 to 159 and arginine 391; that span reads KR. The interval 394–399 is interaction with auxin-responsive proteins; it reads PFDPRE. 447–449 lines the 1D-myo-inositol hexakisphosphate pocket; the sequence is VFR. Residues 451–455 form an interaction with auxin-responsive proteins region; that stretch reads CIMGR. Residue arginine 482 coordinates 1D-myo-inositol hexakisphosphate. The interval 510–511 is interaction with auxin-responsive proteins; it reads AF. Residues 530–531 and arginine 555 each bind 1D-myo-inositol hexakisphosphate; that span reads QK.

As to quaternary structure, part of a SCF (SKP1-cullin-F-box) protein ligase complex. May interact with auxin and auxin-responsive proteins.

The protein resides in the nucleus. It participates in protein modification; protein ubiquitination. The protein is F-box protein FBX14 (FBX14) of Arabidopsis thaliana (Mouse-ear cress).